The sequence spans 156 residues: FAD synthase (156 aa).

ATP-binding positions include 16-17 (TF), 21-24 (HPGH), aspartate 101, and tyrosine 129.

The protein belongs to the archaeal FAD synthase family. As to quaternary structure, homodimer. Requires a divalent metal cation as cofactor.

The enzyme catalyses FMN + ATP + H(+) = FAD + diphosphate. The protein operates within cofactor biosynthesis; FAD biosynthesis; FAD from FMN: step 1/1. Catalyzes the transfer of the AMP portion of ATP to flavin mononucleotide (FMN) to produce flavin adenine dinucleotide (FAD) coenzyme. The chain is FAD synthase from Methanococcus aeolicus (strain ATCC BAA-1280 / DSM 17508 / OCM 812 / Nankai-3).